A 176-amino-acid polypeptide reads, in one-letter code: ATP-dependent protease subunit HslV (176 aa).

Threonine 2 is an active-site residue. The Na(+) site is built by glycine 157, cysteine 160, and threonine 163.

This sequence belongs to the peptidase T1B family. HslV subfamily. A double ring-shaped homohexamer of HslV is capped on each side by a ring-shaped HslU homohexamer. The assembly of the HslU/HslV complex is dependent on binding of ATP.

It is found in the cytoplasm. The catalysed reaction is ATP-dependent cleavage of peptide bonds with broad specificity.. Its activity is regulated as follows. Allosterically activated by HslU binding. Its function is as follows. Protease subunit of a proteasome-like degradation complex believed to be a general protein degrading machinery. This is ATP-dependent protease subunit HslV from Marinobacter nauticus (strain ATCC 700491 / DSM 11845 / VT8) (Marinobacter aquaeolei).